We begin with the raw amino-acid sequence, 860 residues long: Protein argonaute-2 (860 aa).

Tyrosine 2 is subject to 3'-nitrotyrosine. In terms of domain architecture, PAZ spans 230 to 349 (PVIEFVCEVL…LPLEVCNIVA (120 aa)). The segment at 312 to 317 (YFKDRH) is interaction with guide RNA. Serine 388 bears the Phosphoserine mark. Residues 518–819 (LVVVILPGKT…VAFRARYHLV (302 aa)) enclose the Piwi domain. The segment at 525–567 (GKTPVYAEVKRVGDTVLGMATQCVQMKNVQRTTPQTLSNLCLK) is interaction with guide RNA. The segment at 588 to 591 (FQQP) is interaction with GW182 family members. An a divalent metal cation-binding site is contributed by aspartate 598. The interaction with GW182 family members stretch occupies residues 651 to 661 (LIQFYKSTRFK). Aspartate 670 serves as a coordination point for a divalent metal cation. Proline 701 carries the 4-hydroxyproline modification. Interaction with guide RNA stretches follow at residues 710 to 711 (KR), 754 to 762 (HAGIQGTSR), and 791 to 813 (YVRC…VAFR). Histidine 808 is a binding site for a divalent metal cation. Residues serine 825, serine 829, serine 832, and serine 835 each carry the phosphoserine modification.

It belongs to the argonaute family. Ago subfamily. Interacts with DICER1 through its Piwi domain and with TARBP2 during assembly of the RNA-induced silencing complex (RISC). Together, DICER1, AGO2 and TARBP2 constitute the trimeric RISC loading complex (RLC), or micro-RNA (miRNA) loading complex (miRLC). Within the RLC/miRLC, DICER1 and TARBP2 are required to process precursor miRNAs (pre-miRNAs) to mature miRNAs and then load them onto AGO2. AGO2 bound to the mature miRNA constitutes the minimal RISC and may subsequently dissociate from DICER1 and TARBP2. Note however that the term RISC has also been used to describe the trimeric RLC/miRLC. The formation of RISC complexes containing siRNAs rather than miRNAs appears to occur independently of DICER1. Interacts with AGO1. Also interacts with DDB1, DDX5, DDX6, DDX20, DHX30, DHX36, DDX47, DHX9, ELAVL, FXR1, GEMIN4, HNRNPF, IGF2BP1, ILF3, IMP8, MATR3, PABPC1, PRMT5, P4HA1, P4HB, RBM4, SART3, TNRC6A, TNRC6B, UPF1 and YBX1. Interacts with the P-body components DCP1A and XRN1. Associates with polysomes and messenger ribonucleoproteins (mNRPs). Interacts with RBM4; the interaction is modulated under stress-induced conditions, occurs under both cell proliferation and differentiation conditions and in an RNA- and phosphorylation-independent manner. Interacts with LIMD1, WTIP and AJUBA. Interacts with TRIM71; the interaction increases in presence of RNA. Interacts with APOBEC3G in an RNA-dependent manner. Interacts with APOBEC3A, APOBEC3C, APOBEC3F and APOBEC3H. Interacts with DICER1, TARBP2, EIF6, MOV10 and RPL7A (60S ribosome subunit); they form a large RNA-induced silencing complex (RISC). Interacts with FMR1. Interacts with ZFP36. Interacts with RC3H1; the interaction is RNA independent. Found in a complex, composed of AGO2, CHD7 and ARB2A. Interacts with SND1 and SYT11. Interacts with CLNK. Interacts with GARRE1. Interacts with GRB2; this interaction is important for the formation of a ternary complex containing GRB2, AGO2 and DICER1. Requires Mg(2+) as cofactor. Mn(2+) is required as a cofactor. Post-translationally, hydroxylated. 4-hydroxylation appears to enhance protein stability but is not required for miRNA-binding or endonuclease activity. Ubiquitinated on surface-exposed lysines by a SCF-like E3 ubiquitin-protein ligase complex containing ZSWIM8 during target-directed microRNA degradation (TDMD), a process that mediates degradation of microRNAs (miRNAs). Ubiquitination by the SCF-like E3 ubiquitin-protein ligase complex containing ZSWIM8 leads to its subsequent degradation, thereby exposing miRNAs for degradation. ZSWIM8 recognizes and binds AGO2 when it is engaged with a TDMD target. In terms of processing, phosphorylation at Ser-388 by AKT3; leads to up-regulate translational repression of microRNA target and down-regulate endonucleolytic cleavage. Post-translationally, a phosphorylation cycle of C-terminal serine cluster (Ser-825-Ser-835) regulates the release of target mRNAs. Target-binding leads to phosphorylation of these residues by CSNK1A1, which reduces the affinity of AGO2 for mRNA and enables target release. The ANKRD52-PPP6C phosphatase complex dephosphorylates the residues, which primes AGO2 for binding a new target.

Its subcellular location is the cytoplasm. It localises to the P-body. The protein resides in the nucleus. The catalysed reaction is Endonucleolytic cleavage to 5'-phosphomonoester.. Its function is as follows. Required for RNA-mediated gene silencing (RNAi) by the RNA-induced silencing complex (RISC). The 'minimal RISC' appears to include AGO2 bound to a short guide RNA such as a microRNA (miRNA) or short interfering RNA (siRNA). These guide RNAs direct RISC to complementary mRNAs that are targets for RISC-mediated gene silencing. The precise mechanism of gene silencing depends on the degree of complementarity between the miRNA or siRNA and its target. Binding of RISC to a perfectly complementary mRNA generally results in silencing due to endonucleolytic cleavage of the mRNA specifically by AGO2. Binding of RISC to a partially complementary mRNA results in silencing through inhibition of translation, and this is independent of endonuclease activity. May inhibit translation initiation by binding to the 7-methylguanosine cap, thereby preventing the recruitment of the translation initiation factor eIF4-E. May also inhibit translation initiation via interaction with EIF6, which itself binds to the 60S ribosomal subunit and prevents its association with the 40S ribosomal subunit. The inhibition of translational initiation leads to the accumulation of the affected mRNA in cytoplasmic processing bodies (P-bodies), where mRNA degradation may subsequently occur. In some cases RISC-mediated translational repression is also observed for miRNAs that perfectly match the 3' untranslated region (3'-UTR). Can also up-regulate the translation of specific mRNAs under certain growth conditions. Binds to the AU element of the 3'-UTR of the TNF (TNF-alpha) mRNA and up-regulates translation under conditions of serum starvation. Also required for transcriptional gene silencing (TGS), in which short RNAs known as antigene RNAs or agRNAs direct the transcriptional repression of complementary promoter regions. The sequence is that of Protein argonaute-2 (Ago2) from Rattus norvegicus (Rat).